The sequence spans 448 residues: Trigger factor (448 aa).

Positions 172–257 constitute a PPIase FKBP-type domain; it reads GDRVTVDFVG…MKKIEWPHLP (86 aa).

It belongs to the FKBP-type PPIase family. Tig subfamily.

Its subcellular location is the cytoplasm. The catalysed reaction is [protein]-peptidylproline (omega=180) = [protein]-peptidylproline (omega=0). In terms of biological role, involved in protein export. Acts as a chaperone by maintaining the newly synthesized protein in an open conformation. Functions as a peptidyl-prolyl cis-trans isomerase. The sequence is that of Trigger factor from Paraburkholderia xenovorans (strain LB400).